A 253-amino-acid chain; its full sequence is Ribonuclease HII (253 aa).

An RNase H type-2 domain is found at 70 to 253; sequence NLIAGIDEVG…KSFEPIKSML (184 aa). Asp76, Glu77, and Asp168 together coordinate a divalent metal cation.

The protein belongs to the RNase HII family. Requires Mn(2+) as cofactor. Mg(2+) is required as a cofactor.

It is found in the cytoplasm. The enzyme catalyses Endonucleolytic cleavage to 5'-phosphomonoester.. Its function is as follows. Endonuclease that specifically degrades the RNA of RNA-DNA hybrids. The sequence is that of Ribonuclease HII from Streptococcus agalactiae serotype Ia (strain ATCC 27591 / A909 / CDC SS700).